A 253-amino-acid chain; its full sequence is 5-oxoprolinase subunit A (253 aa).

The protein belongs to the LamB/PxpA family. Forms a complex composed of PxpA, PxpB and PxpC.

It carries out the reaction 5-oxo-L-proline + ATP + 2 H2O = L-glutamate + ADP + phosphate + H(+). In terms of biological role, catalyzes the cleavage of 5-oxoproline to form L-glutamate coupled to the hydrolysis of ATP to ADP and inorganic phosphate. In Bacillus cereus (strain ATCC 10987 / NRS 248), this protein is 5-oxoprolinase subunit A.